We begin with the raw amino-acid sequence, 186 residues long: Ribosome-recycling factor (186 aa).

It belongs to the RRF family.

It localises to the cytoplasm. Its function is as follows. Responsible for the release of ribosomes from messenger RNA at the termination of protein biosynthesis. May increase the efficiency of translation by recycling ribosomes from one round of translation to another. This chain is Ribosome-recycling factor, found in Methylibium petroleiphilum (strain ATCC BAA-1232 / LMG 22953 / PM1).